Reading from the N-terminus, the 65-residue chain is Hirudin-2' (65 aa).

Residues 1-3 are interaction with thrombin active site; it reads ITY. 3 disulfide bridges follow: C6/C14, C16/C28, and C22/C39. Positions 39–65 are disordered; it reads CVTGEGTPKPQSHNDGDFEEIPEEYLQ. A glycan (O-linked (GalNAc...) threonine) is linked at T45. The tract at residues 55 to 65 is interaction with fibrinogen-binding exosite of thrombin; sequence DFEEIPEEYLQ. The span at 55-65 shows a compositional bias: acidic residues; the sequence is DFEEIPEEYLQ. A Sulfotyrosine modification is found at Y63.

The protein belongs to the protease inhibitor I14 (hirudin) family.

The protein resides in the secreted. Functionally, hirudin is a potent thrombin-specific protease inhibitor. It forms a stable non-covalent complex with alpha-thrombin, thereby abolishing its ability to cleave fibrinogen. This is Hirudin-2' from Hirudo medicinalis (Medicinal leech).